A 140-amino-acid chain; its full sequence is uncharacterized protein (140 aa).

The disordered stretch occupies residues 34–88 (PLRWRNRARNREKPHSPRAVSSPATHSLPPSNPCRLTPTLSSARPREGSCPSKCS).

As to expression, expressed in a range of cell lines, including B-cell lymphoma and prostate.

This is an uncharacterized protein from Homo sapiens (Human).